The chain runs to 552 residues: Ferry endosomal RAB5 effector complex subunit 3 (552 aa).

The segment at 383-403 (LKESLDSGNQNGGNDDKTKNA) is disordered.

As to quaternary structure, component of the FERRY complex composed of five subunits, TBCK, PPP1R21, FERRY3, CRYZL1 and GATD1 with a ratio of 1:2:1:2:4, respectively.

The protein resides in the cytoplasm. The protein localises to the early endosome. Component of the FERRY complex (Five-subunit Endosomal Rab5 and RNA/ribosome intermediary). The FERRY complex directly interacts with mRNAs and RAB5A, and functions as a RAB5A effector involved in the localization and the distribution of specific mRNAs most likely by mediating their endosomal transport. The complex recruits mRNAs and ribosomes to early endosomes through direct mRNA-interaction. Plays a role in mast cell degranulation. This chain is Ferry endosomal RAB5 effector complex subunit 3, found in Homo sapiens (Human).